The following is a 417-amino-acid chain: Tyrosine--tRNA ligase (417 aa).

Y39 contributes to the L-tyrosine binding site. Residues 44-53 (PTASSLHVGH) carry the 'HIGH' region motif. L-tyrosine-binding residues include Y176 and Q180. The 'KMSKS' region signature appears at 236–240 (KMGKS). K239 contacts ATP. Residues 350–416 (VGVLSLIVRA…GKKKHVLVRP (67 aa)) enclose the S4 RNA-binding domain.

It belongs to the class-I aminoacyl-tRNA synthetase family. TyrS type 1 subfamily. Homodimer.

The protein localises to the cytoplasm. It carries out the reaction tRNA(Tyr) + L-tyrosine + ATP = L-tyrosyl-tRNA(Tyr) + AMP + diphosphate + H(+). Functionally, catalyzes the attachment of tyrosine to tRNA(Tyr) in a two-step reaction: tyrosine is first activated by ATP to form Tyr-AMP and then transferred to the acceptor end of tRNA(Tyr). The chain is Tyrosine--tRNA ligase from Agrobacterium fabrum (strain C58 / ATCC 33970) (Agrobacterium tumefaciens (strain C58)).